Here is a 391-residue protein sequence, read N- to C-terminus: Probable inactive allantoicase (391 aa).

The protein belongs to the allantoicase family.

Functionally, the function of this enzyme is unclear as allantoicase activity is not known to exist in mammals. In Homo sapiens (Human), this protein is Probable inactive allantoicase.